Reading from the N-terminus, the 201-residue chain is Ribonuclease HII (201 aa).

The 191-residue stretch at 10-200 (LIEAGCDEAG…LGDGQLELFS (191 aa)) folds into the RNase H type-2 domain. A divalent metal cation is bound by residues Asp16, Glu17, and Asp108.

It belongs to the RNase HII family. It depends on Mn(2+) as a cofactor. The cofactor is Mg(2+).

It localises to the cytoplasm. It carries out the reaction Endonucleolytic cleavage to 5'-phosphomonoester.. In terms of biological role, endonuclease that specifically degrades the RNA of RNA-DNA hybrids. This chain is Ribonuclease HII, found in Bacteroides fragilis (strain ATCC 25285 / DSM 2151 / CCUG 4856 / JCM 11019 / LMG 10263 / NCTC 9343 / Onslow / VPI 2553 / EN-2).